Reading from the N-terminus, the 198-residue chain is ATP synthase protein MI25 (198 aa).

A helical membrane pass occupies residues Ile-29–Ser-49.

Belongs to the ATPase protein MI25 family. In terms of assembly, F-type ATPases have 2 components, CF(1) - the catalytic core - and CF(0) - the membrane proton channel. CF(1) has five subunits: alpha(3), beta(3), gamma(1), delta(1), epsilon(1). CF(0) has three main subunits: a, b and c.

The protein localises to the mitochondrion membrane. Functionally, this is one of the chains of the nonenzymatic component (CF(0) subunit) of the mitochondrial ATPase complex. The protein is ATP synthase protein MI25 of Nicotiana tabacum (Common tobacco).